The primary structure comprises 310 residues: Olfactory receptor 8I2 (310 aa).

Residues 1 to 25 (MAGNNFTEVTVFILSGFANHPELQV) are Extracellular-facing. A glycan (N-linked (GlcNAc...) asparagine) is linked at Asn-5. The helical transmembrane segment at 26–46 (SLFLMFLFIYLFTVLGNLGLI) threads the bilayer. Residues 47-54 (TLIRMDSQ) are Cytoplasmic-facing. A helical membrane pass occupies residues 55–75 (LHTPMYFFLSNLAFIDIFYSS). The Extracellular portion of the chain corresponds to 76-99 (TVTPKALVNFQSNRRSISFVGCFV). Cys-97 and Cys-188 are joined by a disulfide. The helical transmembrane segment at 100 to 120 (QMYFFVGLVCCECFLLGSMAY) threads the bilayer. Topologically, residues 121–139 (NRYIAICNPLLYSVVMSQK) are cytoplasmic. A helical membrane pass occupies residues 140–160 (VSNWLGVMPYVIGFTSSLISV). Residues 161–196 (WVISSLAFCDSSINHFFCDTTALLALSCVDTFGTEM) are Extracellular-facing. Residues 197–216 (VSFVLAGFTLLSSLLIITVT) traverse the membrane as a helical segment. At 217–236 (YIIIISAILRIQSAAGRQKA) the chain is on the cytoplasmic side. Residues 237-257 (FSTCASHLMAVTIFYGSLIFT) form a helical membrane-spanning segment. The Extracellular segment spans residues 258–270 (YLQPDNTSSLTQA). Residues 271–291 (QVASVFYTIVIPMLNPLIYSL) traverse the membrane as a helical segment. At 292 to 310 (RNKDVKNALLRVIHRKLFP) the chain is on the cytoplasmic side.

The protein belongs to the G-protein coupled receptor 1 family.

The protein resides in the cell membrane. Odorant receptor. The polypeptide is Olfactory receptor 8I2 (OR8I2) (Homo sapiens (Human)).